A 325-amino-acid chain; its full sequence is tRNA dimethylallyltransferase (325 aa).

Residue 25 to 32 (GNTGSGKS) coordinates ATP. A substrate-binding site is contributed by 27-32 (TGSGKS). Residues 50-53 (DSRQ) form an interaction with substrate tRNA region.

This sequence belongs to the IPP transferase family. Monomer. Mg(2+) is required as a cofactor.

The enzyme catalyses adenosine(37) in tRNA + dimethylallyl diphosphate = N(6)-dimethylallyladenosine(37) in tRNA + diphosphate. Catalyzes the transfer of a dimethylallyl group onto the adenine at position 37 in tRNAs that read codons beginning with uridine, leading to the formation of N6-(dimethylallyl)adenosine (i(6)A). In Dehalococcoides mccartyi (strain ATCC BAA-2266 / KCTC 15142 / 195) (Dehalococcoides ethenogenes (strain 195)), this protein is tRNA dimethylallyltransferase.